Consider the following 286-residue polypeptide: 4-diphosphocytidyl-2-C-methyl-D-erythritol kinase (286 aa).

Residue K8 is part of the active site. Residue 92–102 (PVSAGLAGGST) coordinates ATP. The active site involves D134.

It belongs to the GHMP kinase family. IspE subfamily.

The enzyme catalyses 4-CDP-2-C-methyl-D-erythritol + ATP = 4-CDP-2-C-methyl-D-erythritol 2-phosphate + ADP + H(+). The protein operates within isoprenoid biosynthesis; isopentenyl diphosphate biosynthesis via DXP pathway; isopentenyl diphosphate from 1-deoxy-D-xylulose 5-phosphate: step 3/6. Functionally, catalyzes the phosphorylation of the position 2 hydroxy group of 4-diphosphocytidyl-2C-methyl-D-erythritol. This Caldicellulosiruptor bescii (strain ATCC BAA-1888 / DSM 6725 / KCTC 15123 / Z-1320) (Anaerocellum thermophilum) protein is 4-diphosphocytidyl-2-C-methyl-D-erythritol kinase.